The primary structure comprises 347 residues: Histone deacetylase 11 (347 aa).

The tract at residues 14 to 318 is histone deacetylase; the sequence is KRWPIVYSPR…ARIIADSILN (305 aa). The active site involves H143.

Belongs to the histone deacetylase family. Interacts with HDAC6.

It is found in the nucleus. It catalyses the reaction N(6)-acetyl-L-lysyl-[histone] + H2O = L-lysyl-[histone] + acetate. Responsible for the deacetylation of lysine residues on the N-terminal part of the core histones (H2A, H2B, H3 and H4). Histone deacetylation gives a tag for epigenetic repression and plays an important role in transcriptional regulation, cell cycle progression and developmental events. Histone deacetylases act via the formation of large multiprotein complexes. The sequence is that of Histone deacetylase 11 (Hdac11) from Mus musculus (Mouse).